The sequence spans 278 residues: 2-dehydro-3-deoxyphosphooctonate aldolase (278 aa).

This sequence belongs to the KdsA family.

It localises to the cytoplasm. The catalysed reaction is D-arabinose 5-phosphate + phosphoenolpyruvate + H2O = 3-deoxy-alpha-D-manno-2-octulosonate-8-phosphate + phosphate. It participates in carbohydrate biosynthesis; 3-deoxy-D-manno-octulosonate biosynthesis; 3-deoxy-D-manno-octulosonate from D-ribulose 5-phosphate: step 2/3. It functions in the pathway bacterial outer membrane biogenesis; lipopolysaccharide biosynthesis. The sequence is that of 2-dehydro-3-deoxyphosphooctonate aldolase from Dechloromonas aromatica (strain RCB).